Reading from the N-terminus, the 170-residue chain is 3-hydroxydecanoyl-[acyl-carrier-protein] dehydratase (170 aa).

Histidine 69 is an active-site residue.

This sequence belongs to the thioester dehydratase family. FabA subfamily. Homodimer.

The protein localises to the cytoplasm. It catalyses the reaction a (3R)-hydroxyacyl-[ACP] = a (2E)-enoyl-[ACP] + H2O. It carries out the reaction (3R)-hydroxydecanoyl-[ACP] = (2E)-decenoyl-[ACP] + H2O. The catalysed reaction is (2E)-decenoyl-[ACP] = (3Z)-decenoyl-[ACP]. It participates in lipid metabolism; fatty acid biosynthesis. In terms of biological role, necessary for the introduction of cis unsaturation into fatty acids. Catalyzes the dehydration of (3R)-3-hydroxydecanoyl-ACP to E-(2)-decenoyl-ACP and then its isomerization to Z-(3)-decenoyl-ACP. Can catalyze the dehydratase reaction for beta-hydroxyacyl-ACPs with saturated chain lengths up to 16:0, being most active on intermediate chain length. This chain is 3-hydroxydecanoyl-[acyl-carrier-protein] dehydratase, found in Caulobacter vibrioides (strain ATCC 19089 / CIP 103742 / CB 15) (Caulobacter crescentus).